The following is a 166-amino-acid chain: Regulatory protein RecX (166 aa).

It belongs to the RecX family.

Its subcellular location is the cytoplasm. Modulates RecA activity. The polypeptide is Regulatory protein RecX (Salmonella arizonae (strain ATCC BAA-731 / CDC346-86 / RSK2980)).